The chain runs to 477 residues: tRNA-2-methylthio-N(6)-dimethylallyladenosine synthase (477 aa).

One can recognise an MTTase N-terminal domain in the interval 9-129; the sequence is RKLHIKSYGC…LPQLLARAKT (121 aa). 6 residues coordinate [4Fe-4S] cluster: cysteine 18, cysteine 54, cysteine 92, cysteine 170, cysteine 174, and cysteine 177. Residues 156 to 386 form the Radical SAM core domain; that stretch reads RSRGISAFVT…QLQNLIDSQQ (231 aa). In terms of domain architecture, TRAM spans 391 to 453; it reads RTALGRTIDV…RYSLFGTLAS (63 aa). Positions 454-477 are disordered; the sequence is KPTSGEPSNHAATGGAQFQTTAGA. Low complexity predominate over residues 464–477; that stretch reads AATGGAQFQTTAGA.

Belongs to the methylthiotransferase family. MiaB subfamily. Monomer. The cofactor is [4Fe-4S] cluster.

The protein localises to the cytoplasm. The catalysed reaction is N(6)-dimethylallyladenosine(37) in tRNA + (sulfur carrier)-SH + AH2 + 2 S-adenosyl-L-methionine = 2-methylsulfanyl-N(6)-dimethylallyladenosine(37) in tRNA + (sulfur carrier)-H + 5'-deoxyadenosine + L-methionine + A + S-adenosyl-L-homocysteine + 2 H(+). Catalyzes the methylthiolation of N6-(dimethylallyl)adenosine (i(6)A), leading to the formation of 2-methylthio-N6-(dimethylallyl)adenosine (ms(2)i(6)A) at position 37 in tRNAs that read codons beginning with uridine. This chain is tRNA-2-methylthio-N(6)-dimethylallyladenosine synthase, found in Nitrobacter winogradskyi (strain ATCC 25391 / DSM 10237 / CIP 104748 / NCIMB 11846 / Nb-255).